The primary structure comprises 259 residues: Ribosomal RNA small subunit methyltransferase J (259 aa).

S-adenosyl-L-methionine contacts are provided by residues 101–102 (RD), 117–118 (ER), 153–154 (SS), and aspartate 176.

Belongs to the methyltransferase superfamily. RsmJ family.

It localises to the cytoplasm. The enzyme catalyses guanosine(1516) in 16S rRNA + S-adenosyl-L-methionine = N(2)-methylguanosine(1516) in 16S rRNA + S-adenosyl-L-homocysteine + H(+). In terms of biological role, specifically methylates the guanosine in position 1516 of 16S rRNA. The chain is Ribosomal RNA small subunit methyltransferase J from Vibrio vulnificus (strain CMCP6).